We begin with the raw amino-acid sequence, 468 residues long: MDFGLQPPEITSGEMYLGPGAGPMLAAAVAWDGLAAELQSMAASYASIVEGMASESWLGPSSAGMAAAAAPYVTWMSGTSAQAKAAADQARAAVVAYETAFAAVVPPPQIAANRSQLISLVATNIFGQNTAAIAATEAEYGEMWAQDTMAMFGYASSSATASRLTPFTAPPQTTNPSGLAGQAAATGQATALASGTNAVTTALSSAAAQFPFDIIPTLLQGLATLSTQYTQLMGQLINAIFGPTGATTYQNLFVTAANVTKFSTWANDAMSAPNLGMTEFKVFWQPPPAPEIPKSSLGAGLGLRSGLSAGLAHAASAGLGQANLVGDLSVPPSWASATPAVRLVANTLPATSLAAAPATQIPANLLGQMALGSMTGGALGAAAPAIYTGSGARARANGGTPSAEPVKLEAVIAQLQKQPDAVRHWNVDKADLDGLLDRLSKQPGIHAVHVSNGDKPKVALPDTQLGSH.

Residues 447-468 (AVHVSNGDKPKVALPDTQLGSH) form a disordered region.

This sequence belongs to the mycobacterial PPE family.

This is an uncharacterized protein from Mycobacterium tuberculosis (strain CDC 1551 / Oshkosh).